A 125-amino-acid polypeptide reads, in one-letter code: Small ribosomal subunit protein uS12 (125 aa).

Asp89 is subject to 3-methylthioaspartic acid.

This sequence belongs to the universal ribosomal protein uS12 family. Part of the 30S ribosomal subunit. Contacts proteins S8 and S17. May interact with IF1 in the 30S initiation complex.

Its function is as follows. With S4 and S5 plays an important role in translational accuracy. Interacts with and stabilizes bases of the 16S rRNA that are involved in tRNA selection in the A site and with the mRNA backbone. Located at the interface of the 30S and 50S subunits, it traverses the body of the 30S subunit contacting proteins on the other side and probably holding the rRNA structure together. The combined cluster of proteins S8, S12 and S17 appears to hold together the shoulder and platform of the 30S subunit. The chain is Small ribosomal subunit protein uS12 from Ralstonia nicotianae (strain ATCC BAA-1114 / GMI1000) (Ralstonia solanacearum).